A 298-amino-acid chain; its full sequence is 33 kDa chaperonin (298 aa).

2 disulfides stabilise this stretch: Cys239/Cys241 and Cys272/Cys275.

Belongs to the HSP33 family. Post-translationally, under oxidizing conditions two disulfide bonds are formed involving the reactive cysteines. Under reducing conditions zinc is bound to the reactive cysteines and the protein is inactive.

The protein resides in the cytoplasm. Its function is as follows. Redox regulated molecular chaperone. Protects both thermally unfolding and oxidatively damaged proteins from irreversible aggregation. Plays an important role in the bacterial defense system toward oxidative stress. The sequence is that of 33 kDa chaperonin from Picosynechococcus sp. (strain ATCC 27264 / PCC 7002 / PR-6) (Agmenellum quadruplicatum).